The following is a 486-amino-acid chain: Ribulose bisphosphate carboxylase large chain (486 aa).

Positions 1-2 are excised as a propeptide; it reads MS. Asn-123 and Thr-173 together coordinate substrate. Residue Lys-175 is the Proton acceptor of the active site. Substrate is bound at residue Lys-177. 3 residues coordinate Mg(2+): Lys-201, Asp-203, and Glu-204. Residue Lys-201 is modified to N6-carboxylysine. Ser-208 is subject to Phosphoserine. Catalysis depends on His-294, which acts as the Proton acceptor. Substrate contacts are provided by Arg-295 and His-327. Thr-330 bears the Phosphothreonine mark. Ser-379 serves as a coordination point for substrate.

It belongs to the RuBisCO large chain family. Type I subfamily. Heterohexadecamer of 8 large chains and 8 small chains; disulfide-linked. The disulfide link is formed within the large subunit homodimers. Mg(2+) is required as a cofactor. The disulfide bond which can form in the large chain dimeric partners within the hexadecamer appears to be associated with oxidative stress and protein turnover.

The protein resides in the plastid. Its subcellular location is the chloroplast. The catalysed reaction is 2 (2R)-3-phosphoglycerate + 2 H(+) = D-ribulose 1,5-bisphosphate + CO2 + H2O. The enzyme catalyses D-ribulose 1,5-bisphosphate + O2 = 2-phosphoglycolate + (2R)-3-phosphoglycerate + 2 H(+). RuBisCO catalyzes two reactions: the carboxylation of D-ribulose 1,5-bisphosphate, the primary event in carbon dioxide fixation, as well as the oxidative fragmentation of the pentose substrate in the photorespiration process. Both reactions occur simultaneously and in competition at the same active site. This Aethionema grandiflorum (Persian stone-cress) protein is Ribulose bisphosphate carboxylase large chain.